The primary structure comprises 539 residues: Chaperonin GroEL (539 aa).

Residues 29–32 (TIGP), 86–90 (DGTTT), glycine 413, 476–478 (NAA), and aspartate 492 contribute to the ATP site.

This sequence belongs to the chaperonin (HSP60) family. Forms a cylinder of 14 subunits composed of two heptameric rings stacked back-to-back. Interacts with the co-chaperonin GroES.

Its subcellular location is the cytoplasm. The catalysed reaction is ATP + H2O + a folded polypeptide = ADP + phosphate + an unfolded polypeptide.. Together with its co-chaperonin GroES, plays an essential role in assisting protein folding. The GroEL-GroES system forms a nano-cage that allows encapsulation of the non-native substrate proteins and provides a physical environment optimized to promote and accelerate protein folding. This is Chaperonin GroEL from Pediococcus pentosaceus (strain ATCC 25745 / CCUG 21536 / LMG 10740 / 183-1w).